The following is a 288-amino-acid chain: Ice-binding protein (288 aa).

The signal sequence occupies residues 1–22 (MFSTTLINTFSLGLLAVVSVVA). 2 consecutive short sequence motifs (ice-binding site motif (T-A/G-X-T/N)) follow at residues 75–78 (TAGN) and 154–157 (TAFN). Asparagine 194 carries N-linked (GlcNAc...) asparagine glycosylation. 2 short sequence motifs (ice-binding site motif (T-A/G-X-T/N)) span residues 196–199 (TGVT) and 265–268 (TGAT).

The protein belongs to the ice-binding protein family.

The protein resides in the secreted. In terms of biological role, binds ice crystals and most probably inhibits their growth in order to prevent cell damage from extracellular ice. The polypeptide is Ice-binding protein (Lentinula edodes (Shiitake mushroom)).